The following is a 485-amino-acid chain: Proline betaine:corrinoid methyltransferase (485 aa).

The protein belongs to the trimethylamine methyltransferase family. As to quaternary structure, the proline betaine:THF methyl transfer system is composed of two methyltransferases, MtpB and MtqA, and the corrinoid protein MtqC.

The enzyme catalyses Co(I)-[quaternary-amine-specific corrinoid protein] + L-proline betaine + H(+) = methyl-Co(III)-[quaternary-amine-specific corrinoid protein] + N-methyl-L-proline. Involved in the degradation of the quaternary amine L-proline betaine. Component of a corrinoid-dependent methyltransferase system that transfers a methyl group from L-proline betaine to tetrahydrofolate (THF), forming methyl-THF, a key intermediate in the Wood-Ljungdahl acetogenesis pathway. MtpB catalyzes the methylation of the corrinoid protein MtqC, using L-proline betaine as the methyl donor. Shows weak activity with some other quaternary amines, including carnitine, phosphocholine, glycine betaine or betonicine, but cannot methylate free cob(I)alamin. This chain is Proline betaine:corrinoid methyltransferase, found in Eubacterium limosum.